We begin with the raw amino-acid sequence, 360 residues long: DNA replication and repair protein RecF (360 aa).

33-40 lines the ATP pocket; sequence GENGSGKT.

This sequence belongs to the RecF family.

The protein resides in the cytoplasm. Its function is as follows. The RecF protein is involved in DNA metabolism; it is required for DNA replication and normal SOS inducibility. RecF binds preferentially to single-stranded, linear DNA. It also seems to bind ATP. The polypeptide is DNA replication and repair protein RecF (Rickettsia rickettsii (strain Iowa)).